The following is a 351-amino-acid chain: D-threonate 4-phosphate dehydrogenase (351 aa).

Substrate is bound by residues His-147 and Thr-148. A divalent metal cation contacts are provided by His-177, His-221, and His-276. Residues Lys-284, Asn-293, and Arg-302 each contribute to the substrate site.

This sequence belongs to the PdxA family. PdxA2 subfamily. In terms of assembly, homodimer. It depends on a divalent metal cation as a cofactor.

The enzyme catalyses 4-O-phospho-D-threonate + NAD(+) = dihydroxyacetone phosphate + CO2 + NADH. Functionally, catalyzes the NAD-dependent oxidation and subsequent decarboxylation of D-threonate 4-phosphate to produce dihydroxyacetone phosphate (DHAP). Can also use 4-hydroxy-L-threonine 4-phosphate as substrate. This chain is D-threonate 4-phosphate dehydrogenase, found in Bordetella bronchiseptica (strain ATCC BAA-588 / NCTC 13252 / RB50) (Alcaligenes bronchisepticus).